Consider the following 193-residue polypeptide: Fibrillarin-like rRNA/tRNA 2'-O-methyltransferase (193 aa).

S-adenosyl-L-methionine-binding positions include 82–83 (TT), 100–101 (EF), 125–126 (DA), and 145–148 (DVAQ).

Belongs to the methyltransferase superfamily. Fibrillarin family. In terms of assembly, interacts with nop5. Component of box C/D small ribonucleoprotein (sRNP) particles that contain rpl7ae, FlpA and nop5, plus a guide RNA.

In terms of biological role, involved in pre-rRNA and tRNA processing. Utilizes the methyl donor S-adenosyl-L-methionine to catalyze the site-specific 2'-hydroxyl methylation of ribose moieties in rRNA and tRNA. Site specificity is provided by a guide RNA that base pairs with the substrate. Methylation occurs at a characteristic distance from the sequence involved in base pairing with the guide RNA. This chain is Fibrillarin-like rRNA/tRNA 2'-O-methyltransferase, found in Methanosarcina mazei (Methanosarcina frisia).